A 66-amino-acid chain; its full sequence is Large ribosomal subunit protein bL31 (66 aa).

Residues C16, C18, C36, and C39 each contribute to the Zn(2+) site.

The protein belongs to the bacterial ribosomal protein bL31 family. Type A subfamily. In terms of assembly, part of the 50S ribosomal subunit during exponential growth. Zn(2+) is required as a cofactor.

Functionally, binds the 23S rRNA. In terms of biological role, while neither of the L31 paralogs is essential, this protein seems to function as the main L31 protein. Has a lower affinity for 70S ribosomes than the non-zinc-containing paralog L31B (ytiA); is displaced by it to varying extents, even under zinc-replete conditions. In Bacillus subtilis (strain 168), this protein is Large ribosomal subunit protein bL31 (rpmE).